The following is a 1490-amino-acid chain: ABC transporter CDR4 (1490 aa).

Residues 1-12 (MADADTSSNSSK) are compositionally biased toward polar residues. Disordered regions lie at residues 1-26 (MADA…GTYQ) and 53-75 (LKRQ…LSGK). The Cytoplasmic segment spans residues 1–516 (MADADTSSNS…NILRIKGNPS (516 aa)). Positions 58–67 (SRQESQKSNE) are enriched in basic and acidic residues. One can recognise an ABC transporter 1 domain in the interval 151–407 (PKYLSLFFRE…FIDMGYECPQ (257 aa)). The next 6 membrane-spanning stretches (helical) occupy residues 517–537 (IHLF…SIFY), 551–571 (AALF…IFSL), 601–621 (LPTK…MVNF), 626–646 (GNFF…SHIF), 659–679 (AMTP…FVIP), and 767–787 (FGIV…LCEI). Topologically, residues 788–1182 (NKGAMQKGEI…VFEQNWRTPS (395 aa)) are cytoplasmic. Residues 846-1090 (FFWRDLTYQV…LINYFEKYGA (245 aa)) enclose the ABC transporter 2 domain. 882–889 (GASGAGKT) is a binding site for ATP. 3 helical membrane-spanning segments follow: residues 1183-1203 (YLYS…FSFY), 1217-1237 (FSVF…LPTF), and 1268-1288 (IPWN…PVGL). An N-linked (GlcNAc...) asparagine glycan is attached at Asn-1291. Helical transmembrane passes span 1304 to 1324 (FMWF…QLCI), 1333 to 1353 (AANL…VLVT), and 1370 to 1390 (FTYL…VTCA). Asn-1424 carries N-linked (GlcNAc...) asparagine glycosylation. A helical membrane pass occupies residues 1455–1475 (IGIYIAFIGINIIGTFILYWF).

It belongs to the ABC transporter superfamily. ABCG family. PDR (TC 3.A.1.205) subfamily.

Its subcellular location is the membrane. This chain is ABC transporter CDR4 (CDR4), found in Candida albicans (Yeast).